Here is a 450-residue protein sequence, read N- to C-terminus: UDP-N-acetylmuramoylalanine--D-glutamate ligase (450 aa).

Residue 119-125 (GSNGKTT) coordinates ATP.

It belongs to the MurCDEF family.

The protein localises to the cytoplasm. It carries out the reaction UDP-N-acetyl-alpha-D-muramoyl-L-alanine + D-glutamate + ATP = UDP-N-acetyl-alpha-D-muramoyl-L-alanyl-D-glutamate + ADP + phosphate + H(+). The protein operates within cell wall biogenesis; peptidoglycan biosynthesis. In terms of biological role, cell wall formation. Catalyzes the addition of glutamate to the nucleotide precursor UDP-N-acetylmuramoyl-L-alanine (UMA). The chain is UDP-N-acetylmuramoylalanine--D-glutamate ligase from Streptococcus sanguinis (strain SK36).